The chain runs to 618 residues: DNA mismatch repair protein MutL (618 aa).

A compositionally biased stretch (low complexity) spans 366–381 (AEPTAAREPATPRYSG). The interval 366–403 (AEPTAAREPATPRYSGGASGGNGGRQSAGGWPHAQPGY) is disordered. Over residues 382–392 (GASGGNGGRQS) the composition is skewed to gly residues.

It belongs to the DNA mismatch repair MutL/HexB family.

Functionally, this protein is involved in the repair of mismatches in DNA. It is required for dam-dependent methyl-directed DNA mismatch repair. May act as a 'molecular matchmaker', a protein that promotes the formation of a stable complex between two or more DNA-binding proteins in an ATP-dependent manner without itself being part of a final effector complex. The protein is DNA mismatch repair protein MutL of Salmonella schwarzengrund (strain CVM19633).